Here is a 505-residue protein sequence, read N- to C-terminus: Dolichyl pyrophosphate Glc1Man9GlcNAc2 alpha-1,3-glucosyltransferase (505 aa).

At 1 to 3 (MAE) the chain is on the lumenal side. Residues 4-24 (IYPSLVQCAIVATAFKVLLFP) form a helical membrane-spanning segment. Residues 25-101 (AYKSTDFEVH…DSWQTVYFQR (77 aa)) are Cytoplasmic-facing. A helical membrane pass occupies residues 102–122 (WTVIVTELVLLYALQMFVDST). The Lumenal portion of the chain corresponds to 123-128 (PGVSKR). A helical transmembrane segment spans residues 129-149 (AAHAAAVSILLSPGLLIIDHI). Residues 150-152 (HFQ) lie on the Cytoplasmic side of the membrane. The chain crosses the membrane as a helical span at residues 153–169 (YNGVMYGILIASLVLAK). The Lumenal segment spans residues 170-173 (KKSS). Residues 174–194 (LLASGLVFAALLCMKHIYLYL) traverse the membrane as a helical segment. Residues 195–224 (APAYFVYLLRVYCLPPKLSPRSIFRIQFFN) lie on the Cytoplasmic side of the membrane. Residues 225 to 245 (CVKLGGGIAAIFAAAFGPFAL) form a helical membrane-spanning segment. Residues 246-319 (KNQIPQIFSR…TSFAVLPDIT (74 aa)) are Lumenal-facing. Residues 320–340 (PRMCFVLTLLFQAIPLIKLFM) traverse the membrane as a helical segment. Over 341 to 359 (RPTWEGFIGGVTLCGYASF) the chain is Cytoplasmic. Residues 360–380 (LFGWHVHEKAILLVIIPFSLI) form a helical membrane-spanning segment. Residues 381-386 (ALKDRR) lie on the Lumenal side of the membrane. The helical transmembrane segment at 387-407 (YLGAFRPLAVAGHVSLFPLIF) threads the bilayer. At 408–409 (TP) the chain is on the cytoplasmic side. A helical membrane pass occupies residues 410-430 (AEFPIKTVYTIFWLVLFLMAF). At 431–450 (DRLAPAPTRQRLFLFDRFST) the chain is on the lumenal side. A helical transmembrane segment spans residues 451-471 (AYITVSIPLIFYCSLMHGIIF). Residues 472-480 (GKSYEFLPL) are Cytoplasmic-facing. The helical transmembrane segment at 481 to 501 (MFTSSYSAIGVVGSWLGFMVV) threads the bilayer. At 502–505 (YFTE) the chain is on the lumenal side.

Belongs to the ALG6/ALG8 glucosyltransferase family.

The protein localises to the endoplasmic reticulum membrane. It carries out the reaction an alpha-D-Glc-(1-&gt;3)-alpha-D-Man-(1-&gt;2)-alpha-D-Man-(1-&gt;2)-alpha-D-Man-(1-&gt;3)-[alpha-D-Man-(1-&gt;2)-alpha-D-Man-(1-&gt;3)-[alpha-D-Man-(1-&gt;2)-alpha-D-Man-(1-&gt;6)]-alpha-D-Man-(1-&gt;6)]-beta-D-Man-(1-&gt;4)-beta-D-GlcNAc-(1-&gt;4)-alpha-D-GlcNAc-diphospho-di-trans,poly-cis-dolichol + a di-trans,poly-cis-dolichyl beta-D-glucosyl phosphate = an alpha-D-Glc-(1-&gt;3)-alpha-D-Glc-(1-&gt;3)-alpha-D-Man-(1-&gt;2)-alpha-D-Man-(1-&gt;2)-alpha-D-Man-(1-&gt;3)-[alpha-D-Man-(1-&gt;2)-alpha-D-Man-(1-&gt;3)-[alpha-D-Man-(1-&gt;2)-alpha-D-Man-(1-&gt;6)]-alpha-D-Man-(1-&gt;6)]-beta-D-Man-(1-&gt;4)-beta-D-GlcNAc-(1-&gt;4)-alpha-D-GlcNAc-diphospho-di-trans,poly-cis-dolichol + a di-trans,poly-cis-dolichyl phosphate + H(+). The protein operates within protein modification; protein glycosylation. In terms of biological role, dolichyl pyrophosphate Glc1Man9GlcNAc2 alpha-1,3-glucosyltransferase that operates in the biosynthetic pathway of dolichol-linked oligosaccharides, the glycan precursors employed in protein asparagine (N)-glycosylation. The assembly of dolichol-linked oligosaccharides begins on the cytosolic side of the endoplasmic reticulum membrane and finishes in its lumen. The sequential addition of sugars to dolichol pyrophosphate produces dolichol-linked oligosaccharides containing fourteen sugars, including two GlcNAcs, nine mannoses and three glucoses. Once assembled, the oligosaccharide is transferred from the lipid to nascent proteins by oligosaccharyltransferases. In the lumen of the endoplasmic reticulum, adds the second glucose residue from dolichyl phosphate glucose (Dol-P-Glc) onto the lipid-linked oligosaccharide intermediate Glc(1)Man(9)GlcNAc(2)-PP-Dol to produce Glc(2)Man(9)GlcNAc(2)-PP-Dol. This is Dolichyl pyrophosphate Glc1Man9GlcNAc2 alpha-1,3-glucosyltransferase (alg-8) from Neurospora crassa (strain ATCC 24698 / 74-OR23-1A / CBS 708.71 / DSM 1257 / FGSC 987).